A 79-amino-acid chain; its full sequence is Conotoxin VnMSGL-0122 (79 aa).

Residues Met-1–Ser-20 form the signal peptide. Residues His-21–Thr-44 constitute a propeptide that is removed on maturation. Intrachain disulfides connect Cys-52/Cys-64, Cys-56/Cys-73, and Cys-63/Cys-77. Leucine amide is present on Leu-78.

It belongs to the conotoxin O3 superfamily. As to expression, expressed by the venom duct.

The protein resides in the secreted. The polypeptide is Conotoxin VnMSGL-0122 (Conus ventricosus (Mediterranean cone)).